We begin with the raw amino-acid sequence, 570 residues long: Membrane protein insertase YidC (570 aa).

The segment covering 31–60 has biased composition (polar residues); sequence QQPVAQTPSVTIDSNGADSSALLNSPNTGE. Residues 31–79 are disordered; the sequence is QQPVAQTPSVTIDSNGADSSALLNSPNTGELDTPETASKPATAEDSNIS. A run of 5 helical transmembrane segments spans residues 230-250, 378-398, 444-464, 487-507, and 522-542; these read PTFS…STPE, WGIA…HLSA, LGGC…YWVL, PYFV…SLNP, and PIIF…YWLV.

Belongs to the OXA1/ALB3/YidC family. Type 1 subfamily. As to quaternary structure, interacts with the Sec translocase complex via SecD. Specifically interacts with transmembrane segments of nascent integral membrane proteins during membrane integration.

It localises to the cell inner membrane. Functionally, required for the insertion and/or proper folding and/or complex formation of integral membrane proteins into the membrane. Involved in integration of membrane proteins that insert both dependently and independently of the Sec translocase complex, as well as at least some lipoproteins. Aids folding of multispanning membrane proteins. This chain is Membrane protein insertase YidC, found in Hahella chejuensis (strain KCTC 2396).